The sequence spans 466 residues: 3-isopropylmalate dehydratase large subunit (466 aa).

Cys-349, Cys-410, and Cys-413 together coordinate [4Fe-4S] cluster.

This sequence belongs to the aconitase/IPM isomerase family. LeuC type 1 subfamily. Heterodimer of LeuC and LeuD. [4Fe-4S] cluster is required as a cofactor.

It catalyses the reaction (2R,3S)-3-isopropylmalate = (2S)-2-isopropylmalate. It participates in amino-acid biosynthesis; L-leucine biosynthesis; L-leucine from 3-methyl-2-oxobutanoate: step 2/4. Catalyzes the isomerization between 2-isopropylmalate and 3-isopropylmalate, via the formation of 2-isopropylmaleate. This Ruthia magnifica subsp. Calyptogena magnifica protein is 3-isopropylmalate dehydratase large subunit.